Consider the following 110-residue polypeptide: Large ribosomal subunit protein uL24 (110 aa).

It belongs to the universal ribosomal protein uL24 family. As to quaternary structure, part of the 50S ribosomal subunit.

Functionally, one of two assembly initiator proteins, it binds directly to the 5'-end of the 23S rRNA, where it nucleates assembly of the 50S subunit. In terms of biological role, one of the proteins that surrounds the polypeptide exit tunnel on the outside of the subunit. The sequence is that of Large ribosomal subunit protein uL24 from Chloroflexus aurantiacus (strain ATCC 29366 / DSM 635 / J-10-fl).